We begin with the raw amino-acid sequence, 479 residues long: Aspartyl/glutamyl-tRNA(Asn/Gln) amidotransferase subunit B (479 aa).

This sequence belongs to the GatB/GatE family. GatB subfamily. Heterotrimer of A, B and C subunits.

It carries out the reaction L-glutamyl-tRNA(Gln) + L-glutamine + ATP + H2O = L-glutaminyl-tRNA(Gln) + L-glutamate + ADP + phosphate + H(+). It catalyses the reaction L-aspartyl-tRNA(Asn) + L-glutamine + ATP + H2O = L-asparaginyl-tRNA(Asn) + L-glutamate + ADP + phosphate + 2 H(+). Allows the formation of correctly charged Asn-tRNA(Asn) or Gln-tRNA(Gln) through the transamidation of misacylated Asp-tRNA(Asn) or Glu-tRNA(Gln) in organisms which lack either or both of asparaginyl-tRNA or glutaminyl-tRNA synthetases. The reaction takes place in the presence of glutamine and ATP through an activated phospho-Asp-tRNA(Asn) or phospho-Glu-tRNA(Gln). The protein is Aspartyl/glutamyl-tRNA(Asn/Gln) amidotransferase subunit B of Deinococcus radiodurans (strain ATCC 13939 / DSM 20539 / JCM 16871 / CCUG 27074 / LMG 4051 / NBRC 15346 / NCIMB 9279 / VKM B-1422 / R1).